Reading from the N-terminus, the 415-residue chain is Queuine tRNA-ribosyltransferase accessory subunit 2 (415 aa).

Residues C351, C353, C356, and H382 each coordinate Zn(2+).

This sequence belongs to the queuine tRNA-ribosyltransferase family. QTRT2 subfamily. As to quaternary structure, heterodimer of a catalytic subunit QTRT1 and an accessory subunit QTRT2. Zn(2+) is required as a cofactor.

It localises to the cytoplasm. Its subcellular location is the mitochondrion outer membrane. Its function is as follows. Non-catalytic subunit of the queuine tRNA-ribosyltransferase (TGT) that catalyzes the base-exchange of a guanine (G) residue with queuine (Q) at position 34 (anticodon wobble position) in tRNAs with GU(N) anticodons (tRNA-Asp, -Asn, -His and -Tyr), resulting in the hypermodified nucleoside queuosine (7-(((4,5-cis-dihydroxy-2-cyclopenten-1-yl)amino)methyl)-7-deazaguanosine). The polypeptide is Queuine tRNA-ribosyltransferase accessory subunit 2 (Homo sapiens (Human)).